Reading from the N-terminus, the 990-residue chain is MSNTQDSAVRRPSLAPEEYSVGWICAIPTELTAAMAMLDTLHGPLESQPKDDGNNYTLGSIGGHNVVIACLPRYGTNDAAVAGISMQRTFSNLRFGLMVGIGGGIPSADNDIRLGDIAVSLPSAQAGGVIQHDMGKKEDGGFRRTGFLNGPPTLLLTAIAKLRATRTLGKEIAEIVNEAFAEEDDEEWRFPEKEDDILFEDGNELDGNGAEGEHVVQRKERKSKNPTCFYGNISSGNSVIKSAKERRRLAEEEGVICVEMEAAGLMNFFNCMVIRGICDYADAHKHKKWQQYAAAVAAAYAKILLCIISPQALKPHRIVHFSVPFGQNSKFIGREEHLRQVLTALTPEEFERDCQRVAITGLGGVGKTRIALEAAFRIRDKHPDCSVFWISAVNVSSFDAGFLEICRQFKVPGINEDKADVKSLAKAYLSQETAGRWLLIIDSADDLDMLYKSVKESDGNGSSRSLAEYLPFSRKGSILFTTRNHKAATYQAGSNVVTVEEMIESDSLQLLETSLIEKGKGFIEDDAKKLVRHLTNLPLAIKQAAAFINQNKITISNYLEVYESSALSDQALIELLSIDFEDQGRYRSDQNPIISTWLISFLDIQKSNPLAARYLYIMSCVAQRGIPRCLLPPASKFDEIQAIGTLTAYAFITELEDQNSFDIHRLVQLAARNWLKTRGELFQRSGDALKQVSRIFPFFKHENRNICIAYLPHAQHVLTFQDFPEDSQESLRDLLHNIGEYYYRTGKYREAEEFYWRALELKKLALGEHHPDTIGSMNNLAVVYERHGEYAKAESLQRQTLELMKQVFGEGHPDTLGSMNNLALVYEQQGEYAEAEKLQQQTLELRKQALGEDHPSTLMSMNNLATIYEQQGEYAKAESLQRQTLELKQQTLGEDHPSTLASMNNLALVYEHQGEYAKAETLYQQTLKLRKQVLGESHPDTLQSMNNLAIVYRLQGKYIEAEGLQQQQQSQATLDEGRLSKPARKRRKKK.

A purine nucleoside phosphorylase domain region spans residues 22 to 304 (GWICAIPTEL…AVAAAYAKIL (283 aa)). The NB-ARC domain occupies 334–563 (REEHLRQVLT…TISNYLEVYE (230 aa)). 6 TPR repeats span residues 732-765 (RDLL…KKLA), 774-807 (IGSM…MKQV), 816-849 (LGSM…RKQA), 858-891 (LMSM…KQQT), 900-933 (LASM…RKQV), and 942-975 (LQSM…ATLD). Positions 965 to 990 (QQQQQSQATLDEGRLSKPARKRRKKK) are disordered. Basic residues predominate over residues 981–990 (KPARKRRKKK).

It carries out the reaction ATP + H2O = D-ribose 5-triphosphate + adenine. The enzyme catalyses dATP + H2O = 2-deoxyribose 5-triphosphate + adenine. In terms of biological role, the N-terminal purine nucleoside phosphorylase (PNP) domain cleaves the N-glycosidic bond of ATP, and to a lesser extent dATP; has very weak activity on adenosine and deoxyadenosine and no activity on (d)ADP or (d)AMP. The protein is Nucleotide-binding leucine-rich repeat (NLR)-like protein of Hyaloscypha variabilis (strain UAMH 11265 / GT02V1 / F) (Meliniomyces variabilis).